Reading from the N-terminus, the 290-residue chain is 4-hydroxy-tetrahydrodipicolinate synthase (290 aa).

Position 44 (Thr44) interacts with pyruvate. Residue Tyr132 is the Proton donor/acceptor of the active site. The active-site Schiff-base intermediate with substrate is the Lys160. Ile202 contacts pyruvate.

This sequence belongs to the DapA family. Homotetramer; dimer of dimers.

The protein resides in the cytoplasm. The catalysed reaction is L-aspartate 4-semialdehyde + pyruvate = (2S,4S)-4-hydroxy-2,3,4,5-tetrahydrodipicolinate + H2O + H(+). Its pathway is amino-acid biosynthesis; L-lysine biosynthesis via DAP pathway; (S)-tetrahydrodipicolinate from L-aspartate: step 3/4. In terms of biological role, catalyzes the condensation of (S)-aspartate-beta-semialdehyde [(S)-ASA] and pyruvate to 4-hydroxy-tetrahydrodipicolinate (HTPA). This is 4-hydroxy-tetrahydrodipicolinate synthase from Trichlorobacter lovleyi (strain ATCC BAA-1151 / DSM 17278 / SZ) (Geobacter lovleyi).